A 431-amino-acid polypeptide reads, in one-letter code: UDP-N-acetylglucosamine--N-acetylmuramyl-(pentapeptide) pyrophosphoryl-undecaprenol N-acetylglucosamine transferase (431 aa).

UDP-N-acetyl-alpha-D-glucosamine is bound by residues 29-31 (TGG), Asn141, Arg177, Ser205, Ile258, and Gln303. The disordered stretch occupies residues 370-431 (AGSGDGQPPA…NPGASAGGAP (62 aa)). Polar residues predominate over residues 395–420 (KQGSMQTSVNGDRSAQLIATNPQSRL).

It belongs to the glycosyltransferase 28 family. MurG subfamily.

Its subcellular location is the cell inner membrane. The catalysed reaction is di-trans,octa-cis-undecaprenyl diphospho-N-acetyl-alpha-D-muramoyl-L-alanyl-D-glutamyl-meso-2,6-diaminopimeloyl-D-alanyl-D-alanine + UDP-N-acetyl-alpha-D-glucosamine = di-trans,octa-cis-undecaprenyl diphospho-[N-acetyl-alpha-D-glucosaminyl-(1-&gt;4)]-N-acetyl-alpha-D-muramoyl-L-alanyl-D-glutamyl-meso-2,6-diaminopimeloyl-D-alanyl-D-alanine + UDP + H(+). It functions in the pathway cell wall biogenesis; peptidoglycan biosynthesis. In terms of biological role, cell wall formation. Catalyzes the transfer of a GlcNAc subunit on undecaprenyl-pyrophosphoryl-MurNAc-pentapeptide (lipid intermediate I) to form undecaprenyl-pyrophosphoryl-MurNAc-(pentapeptide)GlcNAc (lipid intermediate II). This Xanthomonas euvesicatoria pv. vesicatoria (strain 85-10) (Xanthomonas campestris pv. vesicatoria) protein is UDP-N-acetylglucosamine--N-acetylmuramyl-(pentapeptide) pyrophosphoryl-undecaprenol N-acetylglucosamine transferase.